The following is a 309-amino-acid chain: D-alanine--D-alanine ligase (309 aa).

The ATP-grasp domain maps to 99–304 (KRVLLQAGIP…FPDLVQKIVD (206 aa)). 132 to 187 (LKELGLPVVIKAPTQGSTIGTFIVREEGELEPAIAGALKYDLSFMAEAYLAGPEIT) provides a ligand contact to ATP. The Mg(2+) site is built by aspartate 258, glutamate 271, and asparagine 273.

It belongs to the D-alanine--D-alanine ligase family. Mg(2+) is required as a cofactor. It depends on Mn(2+) as a cofactor.

It localises to the cytoplasm. The enzyme catalyses 2 D-alanine + ATP = D-alanyl-D-alanine + ADP + phosphate + H(+). It participates in cell wall biogenesis; peptidoglycan biosynthesis. Cell wall formation. The chain is D-alanine--D-alanine ligase from Moorella thermoacetica (strain ATCC 39073 / JCM 9320).